The primary structure comprises 303 residues: Heme A synthase (303 aa).

Residues 1 to 8 are Cytoplasmic-facing; it reads MFGKKNLK. A helical membrane pass occupies residues 9–29; sequence WLGVVATLMMTFVQLGGALVT. Residues 30 to 67 lie on the Extracellular side of the membrane; that stretch reads KTGSADGCGSSWPLCHGALIPEFFPIDTIIELSHRAVS. C37 and C44 are joined by a disulfide. Residue E60 is part of the active site. H63 is a binding site for heme o. A helical transmembrane segment spans residues 68–88; that stretch reads ALSLLMVLWLVITAWKHIGYI. Residues 89–93 lie on the Cytoplasmic side of the membrane; the sequence is KEIKP. The helical transmembrane segment at 94-114 threads the bilayer; the sequence is LSIISVGFLLLQALIGAAAVI. Residues 115–125 lie on the Extracellular side of the membrane; that stretch reads WQQNDYVLALH. H125 serves as a coordination point for heme o. Residues 126 to 146 form a helical membrane-spanning segment; the sequence is FGISLISFSSVFLITLIIFSI. The Cytoplasmic portion of the chain corresponds to 147–163; that stretch reads DQKYEADELYIKKPLRR. Residues 164-184 form a helical membrane-spanning segment; the sequence is LTWLMAIIIYCGVYTGALVRH. Residues 185–215 are Extracellular-facing; that stretch reads ADASLAYGGWPLPFHDLVPHSEQDWVQLTHR. Heme b is bound at residue H214. A helical transmembrane segment spans residues 216 to 236; the sequence is IMAFIVFTIIMITYIHAVKNY. Residues 237 to 244 lie on the Cytoplasmic side of the membrane; sequence PNNRTVHY. Residues 245–265 form a helical membrane-spanning segment; that stretch reads GYTAAFILVILQVITGALSIM. Residues 266–270 are Extracellular-facing; sequence TNVNL. A helical membrane pass occupies residues 271-291; it reads IIALFHALFITYLFGMTTYFI. Heme b is bound at residue H276. The Cytoplasmic portion of the chain corresponds to 292 to 303; the sequence is MLMLRSVRSDKQ.

Belongs to the COX15/CtaA family. Type 1 subfamily. Interacts with CtaB. The cofactor is heme b.

Its subcellular location is the cell membrane. The catalysed reaction is Fe(II)-heme o + 2 A + H2O = Fe(II)-heme a + 2 AH2. It functions in the pathway porphyrin-containing compound metabolism; heme A biosynthesis; heme A from heme O: step 1/1. Catalyzes the conversion of heme O to heme A by two successive hydroxylations of the methyl group at C8. The first hydroxylation forms heme I, the second hydroxylation results in an unstable dihydroxymethyl group, which spontaneously dehydrates, resulting in the formyl group of heme A. This chain is Heme A synthase, found in Staphylococcus aureus (strain Mu3 / ATCC 700698).